Reading from the N-terminus, the 211-residue chain is MTSQRTRERLIQRLCEEGISNQRVLDVIRKTPRHLFVDEALAHRAYEDTALPIGHNQTISQPYMVARMSELLLAAGPLDKVMEIGTGSGYQTAVLAQLVERVFSVERIKVLQDRAKERLVELNLRNVVFRWGDGWEGWPALAPYNGIIVTAVATDVPQALLDQLAPGGRLVIPVGSGEVQQLMLIIREENGFSRHVLGAVRFVPLLNGPIA.

Residue Ser60 is part of the active site.

This sequence belongs to the methyltransferase superfamily. L-isoaspartyl/D-aspartyl protein methyltransferase family.

It localises to the cytoplasm. The enzyme catalyses [protein]-L-isoaspartate + S-adenosyl-L-methionine = [protein]-L-isoaspartate alpha-methyl ester + S-adenosyl-L-homocysteine. Functionally, catalyzes the methyl esterification of L-isoaspartyl residues in peptides and proteins that result from spontaneous decomposition of normal L-aspartyl and L-asparaginyl residues. It plays a role in the repair and/or degradation of damaged proteins. In Pseudomonas savastanoi pv. phaseolicola (strain 1448A / Race 6) (Pseudomonas syringae pv. phaseolicola (strain 1448A / Race 6)), this protein is Protein-L-isoaspartate O-methyltransferase.